Consider the following 568-residue polypeptide: Pyruvate carboxylase subunit B (568 aa).

Residues 4–264 (IKVVETAFRD…DTGLDLEILK (261 aa)) form the Pyruvate carboxyltransferase domain. Residues 12-16 (RDAHQ) and Arg-83 contribute to the substrate site. Position 13 (Asp-13) interacts with a divalent metal cation. Positions 174, 203, and 205 each coordinate a divalent metal cation. N6-carboxylysine is present on Lys-174. Residue Thr-339 coordinates substrate. The 76-residue stretch at 493-568 (PEPVDVEGAV…ETGDIIMVIK (76 aa)) folds into the Biotinyl-binding domain. Lys-534 is subject to N6-biotinyllysine.

Heterooctamer of four A and four B subunits. Requires Mg(2+) as cofactor. Mn(2+) serves as cofactor. The cofactor is Co(2+).

It carries out the reaction hydrogencarbonate + pyruvate + ATP = oxaloacetate + ADP + phosphate + H(+). With respect to regulation, inhibited by ADP and alpha-ketoglutarate. Functionally, pyruvate carboxylase catalyzes a 2-step reaction, involving the ATP-dependent carboxylation of the covalently attached biotin in the first step and the transfer of the carboxyl group to pyruvate in the second. In Methanothermobacter thermautotrophicus (strain ATCC 29096 / DSM 1053 / JCM 10044 / NBRC 100330 / Delta H) (Methanobacterium thermoautotrophicum), this protein is Pyruvate carboxylase subunit B (pycB).